Consider the following 753-residue polypeptide: Eukaryotic translation initiation factor 3 subunit B (753 aa).

The region spanning 42 to 129 (TMLVVDNIPI…NVLHVNRFGD (88 aa)) is the RRM domain. WD repeat units follow at residues 142-185 (DLPS…WWNG), 203-241 (NSKW…GPIG), 321-362 (DTQS…LLDR), 537-580 (LDSK…DERR), and 595-640 (GEHY…LLHE). A coiled-coil region spans residues 723–753 (KSKAKIDVKGQEARVEEWVEELIDETEELSM).

The protein belongs to the eIF-3 subunit B family. Component of the eukaryotic translation initiation factor 3 (eIF-3) complex.

The protein localises to the cytoplasm. Functionally, RNA-binding component of the eukaryotic translation initiation factor 3 (eIF-3) complex, which is involved in protein synthesis of a specialized repertoire of mRNAs and, together with other initiation factors, stimulates binding of mRNA and methionyl-tRNAi to the 40S ribosome. The eIF-3 complex specifically targets and initiates translation of a subset of mRNAs involved in cell proliferation. The polypeptide is Eukaryotic translation initiation factor 3 subunit B (Cryptococcus neoformans var. neoformans serotype D (strain B-3501A) (Filobasidiella neoformans)).